The primary structure comprises 148 residues: Large ribosomal subunit protein bL9 (148 aa).

This sequence belongs to the bacterial ribosomal protein bL9 family.

Its function is as follows. Binds to the 23S rRNA. This is Large ribosomal subunit protein bL9 from Acidithiobacillus ferrooxidans (strain ATCC 23270 / DSM 14882 / CIP 104768 / NCIMB 8455) (Ferrobacillus ferrooxidans (strain ATCC 23270)).